A 90-amino-acid chain; its full sequence is Probable Fe(2+)-trafficking protein (90 aa).

This sequence belongs to the Fe(2+)-trafficking protein family.

Its function is as follows. Could be a mediator in iron transactions between iron acquisition and iron-requiring processes, such as synthesis and/or repair of Fe-S clusters in biosynthetic enzymes. The sequence is that of Probable Fe(2+)-trafficking protein from Coxiella burnetii (strain CbuK_Q154) (Coxiella burnetii (strain Q154)).